The chain runs to 316 residues: Thymidylate synthase (316 aa).

Residues R23 and 178 to 179 contribute to the dUMP site; that span reads RR. The active-site Nucleophile is the C198. DUMP contacts are provided by residues 218–221, N229, and 259–261; these read RSAD and HLY. Position 221 (D221) interacts with (6R)-5,10-methylene-5,6,7,8-tetrahydrofolate. A315 serves as a coordination point for (6R)-5,10-methylene-5,6,7,8-tetrahydrofolate.

This sequence belongs to the thymidylate synthase family. Bacterial-type ThyA subfamily. In terms of assembly, homodimer.

It is found in the cytoplasm. The catalysed reaction is dUMP + (6R)-5,10-methylene-5,6,7,8-tetrahydrofolate = 7,8-dihydrofolate + dTMP. It functions in the pathway pyrimidine metabolism; dTTP biosynthesis. Catalyzes the reductive methylation of 2'-deoxyuridine-5'-monophosphate (dUMP) to 2'-deoxythymidine-5'-monophosphate (dTMP) while utilizing 5,10-methylenetetrahydrofolate (mTHF) as the methyl donor and reductant in the reaction, yielding dihydrofolate (DHF) as a by-product. This enzymatic reaction provides an intracellular de novo source of dTMP, an essential precursor for DNA biosynthesis. The sequence is that of Thymidylate synthase from Lacticaseibacillus casei (Lactobacillus casei).